The chain runs to 217 residues: uncharacterized protein (217 aa).

Residues Ala59–Asn76 are compositionally biased toward polar residues. Disordered stretches follow at residues Ala59–Asn105 and Lys124–Lys217. Ser68 is subject to Phosphoserine. A Phosphothreonine modification is found at Thr92. Residues Lys124–Gln135 show a composition bias toward basic and acidic residues. Over residues Glu136 to Val147 the composition is skewed to acidic residues. Positions Glu148–Asn157 are enriched in polar residues. The span at Leu173–Asp188 shows a compositional bias: acidic residues. The segment covering Trp199 to Lys217 has biased composition (polar residues).

This is an uncharacterized protein from Schizosaccharomyces pombe (strain 972 / ATCC 24843) (Fission yeast).